The chain runs to 324 residues: UPF0158 protein CPn_0518/CP_0235/CPj0518/CpB0539 (324 aa).

It belongs to the UPF0158 family.

The sequence is that of UPF0158 protein CPn_0518/CP_0235/CPj0518/CpB0539 from Chlamydia pneumoniae (Chlamydophila pneumoniae).